A 503-amino-acid chain; its full sequence is Cobyric acid synthase (503 aa).

Residues 255–444 form the GATase cobBQ-type domain; sequence DIDIAVIRYP…FHDLFHNDAF (190 aa). The active-site Nucleophile is the C337. H436 is a catalytic residue.

The protein belongs to the CobB/CobQ family. CobQ subfamily.

It participates in cofactor biosynthesis; adenosylcobalamin biosynthesis. In terms of biological role, catalyzes amidations at positions B, D, E, and G on adenosylcobyrinic A,C-diamide. NH(2) groups are provided by glutamine, and one molecule of ATP is hydrogenolyzed for each amidation. The polypeptide is Cobyric acid synthase (Geobacillus sp. (strain WCH70)).